Here is a 311-residue protein sequence, read N- to C-terminus: Putative ribose-phosphate pyrophosphokinase 2 (311 aa).

Residues 38–40 and 97–98 contribute to the ATP site; these read DGE and RQ. Residues His-131 and Asp-171 each contribute to the Mg(2+) site. Asp-219 provides a ligand contact to D-ribose 5-phosphate.

Belongs to the ribose-phosphate pyrophosphokinase family. Class I subfamily. In terms of assembly, homohexamer. Mg(2+) is required as a cofactor.

The protein resides in the cytoplasm. It carries out the reaction D-ribose 5-phosphate + ATP = 5-phospho-alpha-D-ribose 1-diphosphate + AMP + H(+). Its pathway is metabolic intermediate biosynthesis; 5-phospho-alpha-D-ribose 1-diphosphate biosynthesis; 5-phospho-alpha-D-ribose 1-diphosphate from D-ribose 5-phosphate (route I): step 1/1. In terms of biological role, involved in the biosynthesis of the central metabolite phospho-alpha-D-ribosyl-1-pyrophosphate (PRPP) via the transfer of pyrophosphoryl group from ATP to 1-hydroxyl of ribose-5-phosphate (Rib-5-P). The polypeptide is Putative ribose-phosphate pyrophosphokinase 2 (Listeria monocytogenes serotype 4b (strain F2365)).